The sequence spans 442 residues: UDP-N-acetylmuramate--L-alanine ligase (442 aa).

Gly109 to Ser115 contacts ATP.

Belongs to the MurCDEF family.

The protein localises to the cytoplasm. The enzyme catalyses UDP-N-acetyl-alpha-D-muramate + L-alanine + ATP = UDP-N-acetyl-alpha-D-muramoyl-L-alanine + ADP + phosphate + H(+). It participates in cell wall biogenesis; peptidoglycan biosynthesis. Functionally, cell wall formation. The protein is UDP-N-acetylmuramate--L-alanine ligase of Streptococcus pyogenes serotype M3 (strain SSI-1).